The sequence spans 134 residues: uncharacterized protein (134 aa).

It is found in the cell membrane. Its function is as follows. May have a role in the regulation of NDH-1 biosynthesis. This is an uncharacterized protein from Paracoccus denitrificans.